The following is a 614-amino-acid chain: Sodium- and chloride-dependent betaine transporter (614 aa).

The Cytoplasmic segment spans residues 1–44 (MDGKVAVQECGPPAVSWVPEEGEKLDQEDEDQVKDRGQWTNKME). The next 3 membrane-spanning stretches (helical) occupy residues 45–65 (FVLS…FPYL), 73–92 (AFFI…VFFL), and 117–137 (GIGL…IIIL). Residues 138–210 (AWALFYLFSS…SGIHDLGSLR (73 aa)) are Extracellular-facing. Cysteine 157 and cysteine 166 are joined by a disulfide. N-linked (GlcNAc...) asparagine glycosylation is found at asparagine 171 and asparagine 183. The next 9 helical transmembrane spans lie at 211–229 (WELA…FCIW), 238–255 (VVYF…ILLI), 291–308 (IFFS…LGSY), 320–341 (IALC…FSIL), 374–393 (MPLS…FLGL), 423–441 (LLIL…FLVT), 458–478 (GICL…VYGA), 499–518 (ISWL…FSLS), and 538–556 (IGWF…FVVI). Residues 557–614 (TLLKTRGPFRKRLRQLITPDSSLPQPKQHPCLDGSAGRNFGPSPTREGLIAGEKETHL) are Cytoplasmic-facing. The disordered stretch occupies residues 576–614 (DSSLPQPKQHPCLDGSAGRNFGPSPTREGLIAGEKETHL).

This sequence belongs to the sodium:neurotransmitter symporter (SNF) (TC 2.A.22) family. SLC6A12 subfamily. Interacts with LIN7C. Expressed in kidney, liver, heart, skeletal muscle, placenta, and a widespread distribution in the brain.

It localises to the basolateral cell membrane. The protein localises to the cell membrane. The catalysed reaction is 4-aminobutanoate(out) + chloride(out) + 3 Na(+)(out) = 4-aminobutanoate(in) + chloride(in) + 3 Na(+)(in). It carries out the reaction glycine betaine(out) + 2 chloride(out) + 3 Na(+)(out) = glycine betaine(in) + 2 chloride(in) + 3 Na(+)(in). In terms of biological role, transporter that mediates cellular uptake of betaine and GABA in a sodium- and chloride-dependent process. May have a role in regulation of GABAergic transmission in the brain through the reuptake of GABA into presynaptic terminals, as well as in osmotic regulation. Probably also involved in renal and hepatic osmotic regulation. The sequence is that of Sodium- and chloride-dependent betaine transporter from Homo sapiens (Human).